A 219-amino-acid chain; its full sequence is Ribose-5-phosphate isomerase A (219 aa).

Substrate-binding positions include 28 to 31 (SGST), 81 to 84 (DGAD), and 94 to 97 (KGGG). Catalysis depends on Glu103, which acts as the Proton acceptor. A substrate-binding site is contributed by Lys121.

The protein belongs to the ribose 5-phosphate isomerase family. In terms of assembly, homodimer.

It catalyses the reaction aldehydo-D-ribose 5-phosphate = D-ribulose 5-phosphate. The protein operates within carbohydrate degradation; pentose phosphate pathway; D-ribose 5-phosphate from D-ribulose 5-phosphate (non-oxidative stage): step 1/1. Functionally, catalyzes the reversible conversion of ribose-5-phosphate to ribulose 5-phosphate. In Actinobacillus pleuropneumoniae serotype 5b (strain L20), this protein is Ribose-5-phosphate isomerase A.